A 539-amino-acid chain; its full sequence is Probable protein kinase UbiB (539 aa).

The chain crosses the membrane as a helical span at residues 23–43 (DLLFALPLPWWMLALRFVLPW). Residues 125–492 (RFDEKPLASA…WHDRKDEPVL (368 aa)) form the Protein kinase domain. ATP-binding positions include 131–139 (LASASVAQV) and Lys153. The Proton acceptor role is filled by Asp288. 2 helical membrane passes run 494-514 (LIGAALLVGGAIQGWVMSEAA) and 517-537 (LLTLTAWPAAIMLIAGLYLIV).

It belongs to the ABC1 family. UbiB subfamily.

Its subcellular location is the cell inner membrane. The protein operates within cofactor biosynthesis; ubiquinone biosynthesis [regulation]. Is probably a protein kinase regulator of UbiI activity which is involved in aerobic coenzyme Q (ubiquinone) biosynthesis. In Pseudomonas syringae pv. syringae (strain B728a), this protein is Probable protein kinase UbiB.